The following is a 262-amino-acid chain: Ribosome-recycling factor, mitochondrial (262 aa).

A mitochondrion-targeting transit peptide spans 1–55 (MALGLRCFRLVHPAFCNSLAALTRPVSEVTLQTVRGRQNDHGQCMAYAAVPVRHF).

Belongs to the RRF family.

The protein resides in the mitochondrion. Functionally, responsible for the disassembly of ribosomes from messenger RNA at the termination of mitochondrial protein biosynthesis. Acts in collaboration with GFM2. Promotes mitochondrial ribosome recycling by dissolution of intersubunit contacts. The protein is Ribosome-recycling factor, mitochondrial (MRRF) of Bos taurus (Bovine).